A 458-amino-acid chain; its full sequence is Elongation factor 1-alpha (458 aa).

A N,N,N-trimethylglycine modification is found at Gly-2. Lys-3 carries the N6,N6-dimethyllysine; alternate modification. The residue at position 3 (Lys-3) is an N6-methyllysine; alternate. Residues Lys-5–Ser-240 form the tr-type G domain. The tract at residues Gly-14 to Ser-21 is G1. Residue Gly-14 to Ser-21 participates in GTP binding. Residue Lys-30 is modified to N6-methyllysine. Positions Gly-70–Asp-74 are G2. The residue at position 79 (Lys-79) is an N6,N6,N6-trimethyllysine. The G3 stretch occupies residues Asp-91–Gly-94. Residues Asp-91–His-95 and Asn-153–Asp-156 each bind GTP. The G4 stretch occupies residues Asn-153–Asp-156. Residues Ser-192–Trp-194 form a G5 region. At Lys-316 the chain carries N6,N6-dimethyllysine; alternate. Lys-316 is subject to N6-methyllysine; alternate. The residue at position 390 (Lys-390) is an N6-methyllysine.

Belongs to the TRAFAC class translation factor GTPase superfamily. Classic translation factor GTPase family. EF-Tu/EF-1A subfamily.

Its subcellular location is the cytoplasm. This protein promotes the GTP-dependent binding of aminoacyl-tRNA to the A-site of ribosomes during protein biosynthesis. The chain is Elongation factor 1-alpha (TEF-1) from Absidia glauca (Pin mould).